Consider the following 601-residue polypeptide: Elongation factor 4 (601 aa).

The 183-residue stretch at 5–187 (EHIRNFSIIA…AIVERLPAPE (183 aa)) folds into the tr-type G domain. Residues 17–22 (DHGKST) and 134–137 (NKID) each bind GTP.

Belongs to the TRAFAC class translation factor GTPase superfamily. Classic translation factor GTPase family. LepA subfamily.

Its subcellular location is the cell inner membrane. It carries out the reaction GTP + H2O = GDP + phosphate + H(+). Required for accurate and efficient protein synthesis under certain stress conditions. May act as a fidelity factor of the translation reaction, by catalyzing a one-codon backward translocation of tRNAs on improperly translocated ribosomes. Back-translocation proceeds from a post-translocation (POST) complex to a pre-translocation (PRE) complex, thus giving elongation factor G a second chance to translocate the tRNAs correctly. Binds to ribosomes in a GTP-dependent manner. This Nitratidesulfovibrio vulgaris (strain ATCC 29579 / DSM 644 / CCUG 34227 / NCIMB 8303 / VKM B-1760 / Hildenborough) (Desulfovibrio vulgaris) protein is Elongation factor 4.